The primary structure comprises 204 residues: Flavin-dependent thymidylate synthase (204 aa).

The 204-residue stretch at 1–204 (MTVTLMQHTS…RYLFCLNQEG (204 aa)) folds into the ThyX domain. Residues S50 and 74 to 76 (RHR) contribute to the FAD site. DUMP contacts are provided by residues 71–74 (ELAR), 84–86 (SSR), and K143. A ThyX motif motif is present at residues 74 to 84 (RHRIASLSVKS). FAD contacts are provided by residues 159–161 (NAR) and N165. A dUMP-binding site is contributed by R170. The active-site Involved in ionization of N3 of dUMP, leading to its activation is R170.

This sequence belongs to the thymidylate synthase ThyX family. In terms of assembly, homotetramer. FAD is required as a cofactor.

It carries out the reaction dUMP + (6R)-5,10-methylene-5,6,7,8-tetrahydrofolate + NADPH + H(+) = dTMP + (6S)-5,6,7,8-tetrahydrofolate + NADP(+). It functions in the pathway pyrimidine metabolism; dTTP biosynthesis. Catalyzes the reductive methylation of 2'-deoxyuridine-5'-monophosphate (dUMP) to 2'-deoxythymidine-5'-monophosphate (dTMP) while utilizing 5,10-methylenetetrahydrofolate (mTHF) as the methyl donor, and NADPH and FADH(2) as the reductant. This Wolinella succinogenes (strain ATCC 29543 / DSM 1740 / CCUG 13145 / JCM 31913 / LMG 7466 / NCTC 11488 / FDC 602W) (Vibrio succinogenes) protein is Flavin-dependent thymidylate synthase.